A 307-amino-acid polypeptide reads, in one-letter code: Golgi to ER traffic protein 2 (307 aa).

At 1–173 (MSDSTDSPAV…QAYDTYQQKL (173 aa)) the chain is on the cytoplasmic side. Residues 41-52 (LSQGSSVKTTGV) show a composition bias toward polar residues. Residues 41–73 (LSQGSSVKTTGVKSVLDEPQPTATSSAIHDEDP) form a disordered region. A helical transmembrane segment spans residues 174–194 (WKSRFLVIRVVVTLFNFFYHY). The Lumenal portion of the chain corresponds to 195–220 (LNVPSFHASNYSYVRDLAQDEFPVRN). Residues 221–240 (FFTWFAAFEVIIVLQYYTVF) form a helical membrane-spanning segment. Residues 241–284 (HKLGLFHAANQNSMIMKLMSMGSMVLPQLNTYQPLVARFLGYYE) lie on the Cytoplasmic side of the membrane. The chain crosses the membrane as a helical span at residues 285-305 (LFGIIFGDLSLVIVLFGLLSF). Residues 306–307 (TK) are Lumenal-facing.

The protein belongs to the GET2 family. In terms of assembly, component of the Golgi to ER traffic (GET) complex, which is composed of GET1, GET2 and GET3. Within the complex, GET1 and GET2 form a heterotetramer which is stabilized by phosphatidylinositol binding and which binds to the GET3 homodimer.

It localises to the endoplasmic reticulum membrane. The protein localises to the golgi apparatus membrane. Functionally, required for the post-translational delivery of tail-anchored (TA) proteins to the endoplasmic reticulum. Together with GET1, acts as a membrane receptor for soluble GET3, which recognizes and selectively binds the transmembrane domain of TA proteins in the cytosol. The GET complex cooperates with the HDEL receptor ERD2 to mediate the ATP-dependent retrieval of resident ER proteins that contain a C-terminal H-D-E-L retention signal from the Golgi to the ER. The polypeptide is Golgi to ER traffic protein 2 (Candida tropicalis (strain ATCC MYA-3404 / T1) (Yeast)).